The primary structure comprises 163 residues: Bacterial ISG15-like ubiquitin-like protein BilA (163 aa).

2 consecutive Ubiquitin-like BIL-type domains span residues 4–80 (LVVF…RCKR) and 81–163 (IRAT…RIEG). Gly-163 participates in a covalent cross-link: Glycyl lysine isopeptide (Gly-Lys) (interchain with K-? in central tail fiber acceptor protein).

In terms of biological role, component of the Bil (bacterial ISG15-like) antiviral defense system, composed of BilA, BilB, BilC and BilD. The Bil system specifically conjugates a ubiquitin-like moiety (bilA) to the bacteriophage central tail fiber (CTF, or tip attachment protein J) via reactions involving E1 (bilD) and E2 (bilB). Modifies CTF of phage SECphi27 and SECphi4, which probably interferes with assembly of the phage tail. Also modifies T5 baseplate hub protein pb3 (gene D16), but not gp27 of phage T6 (Bil defends against T6). Bil-encoding bacteria produce mostly defective phage SECphi27, many of which have phage assembly defects, including no tails. SECphi27 phage progeny produced in E.coli with the Bil system inject less DNA into naive host cells, maybe because the phage are less able to adsorb and inject their DNA into host cells. Functionally, expression of the Bil system in E.coli (strain MG1655) confers about 100-fold resistance to phage SECphi27, SECphi18, SECphi6, SECphi4 and T5, but not to SECphi17. When cells expressing the Bil system are infected by phage SECphi27 at low multiplicity of infection (0.03 MOI) the culture survives, at 3.0 MOI the culture collapses at the same time as cells without the Bil system. The protein is Bacterial ISG15-like ubiquitin-like protein BilA of Collimonas sp. (strain OK412).